The following is a 227-amino-acid chain: Neuromodulin (227 aa).

Residues 1 to 227 (MLCCMRRTKQ…EDPEADQEHA (227 aa)) are disordered. 2 S-palmitoyl cysteine lipidation sites follow: Cys3 and Cys4. Positions 9 to 32 (KQVEKNDEDQKIEQDGVKPEDKAH) are enriched in basic and acidic residues. In terms of domain architecture, IQ spans 31–60 (AHKAATKIQASFRGHITRKKLKGEKKGDAP). The residue at position 41 (Ser41) is a Phosphoserine; by PHK. Basic and acidic residues predominate over residues 54-84 (EKKGDAPAAEAEAKEKDDAPVADGVEKKEGD). Residues 85 to 97 (GSATTDAAPATSP) show a composition bias toward low complexity. A phosphoserine mark is found at Ser86 and Ser96. A compositionally biased stretch (basic and acidic residues) spans 98–127 (KAEEPSKAGDAPSEEKKGEGDAAPSEEKAG). Over residues 128-139 (SAETESAAKATT) the composition is skewed to low complexity. Thr138 carries the phosphothreonine modification. Ser142, Ser144, and Ser145 each carry phosphoserine. The span at 146 to 158 (KAEDGPAKEEPKQ) shows a compositional bias: basic and acidic residues. Residues 159 to 193 (ADVPAAVTDAAATTPAAEDAATKAAQPPTETAESS) are compositionally biased toward low complexity. Phosphothreonine is present on Thr172. Phosphoserine; by CK2 is present on residues Ser192 and Ser193. The segment covering 202 to 215 (VDEAKPKESARQDE) has biased composition (basic and acidic residues). Positions 216–227 (GKEDPEADQEHA) are enriched in acidic residues.

This sequence belongs to the neuromodulin family. Identified in a complex containing FGFR4, NCAM1, CDH2, PLCG1, FRS2, SRC, SHC1, GAP43 and CTTN. Interacts (via IQ domain) with calmodulin. Binds calmodulin with a greater affinity in the absence of Ca(2+) than in its presence. Phosphorylated. Phosphorylation of this protein by a protein kinase C is specifically correlated with certain forms of synaptic plasticity. In terms of processing, palmitoylated by ZDHHC3. Palmitoylation is regulated by ARF6 and is essential for plasma membrane association and axonal and dendritic filopodia induction. Deacylated by LYPLA2. In terms of tissue distribution, expressed in the hippocampus (at protein level). Expressed in the dorsal root ganglion and the spinal cord (at protein level).

The protein localises to the cell membrane. Its subcellular location is the cell projection. The protein resides in the growth cone membrane. It is found in the synapse. It localises to the filopodium membrane. The protein localises to the perikaryon. Its subcellular location is the dendrite. The protein resides in the axon. It is found in the cytoplasm. Its function is as follows. This protein is associated with nerve growth. It is a major component of the motile 'growth cones' that form the tips of elongating axons. Plays a role in axonal and dendritic filopodia induction. The chain is Neuromodulin (Gap43) from Mus musculus (Mouse).